We begin with the raw amino-acid sequence, 162 residues long: Putative pre-16S rRNA nuclease (162 aa).

Belongs to the YqgF nuclease family.

Its subcellular location is the cytoplasm. In terms of biological role, could be a nuclease involved in processing of the 5'-end of pre-16S rRNA. In Brucella abortus (strain S19), this protein is Putative pre-16S rRNA nuclease.